We begin with the raw amino-acid sequence, 333 residues long: NADH dehydrogenase (ubiquinone) complex I, assembly factor 6 (333 aa).

Residues 1 to 44 (MATSMLGSVPGPRPFGLAGLFRRRPPRDPWERVRRLPRLSAVRR) constitute a mitochondrion transit peptide.

The protein belongs to the NDUFAF6 family.

The protein resides in the mitochondrion inner membrane. Involved in the assembly of mitochondrial NADH:ubiquinone oxidoreductase complex (complex I) at early stages. May play a role in the biogenesis of complex I subunit MT-ND1. In Rattus norvegicus (Rat), this protein is NADH dehydrogenase (ubiquinone) complex I, assembly factor 6 (Ndufaf6).